Reading from the N-terminus, the 415-residue chain is Beta-1,4-glucuronyltransferase 1 (415 aa).

Residues 1–8 (MQMSYAIR) lie on the Cytoplasmic side of the membrane. The helical; Signal-anchor for type II membrane protein transmembrane segment at 9 to 36 (CAFYQLLLAALMLVAMLQLLYLSLLSGL) threads the bilayer. Residues 37 to 415 (HGQEEQDQYF…AKYPNSPRRC (379 aa)) lie on the Lumenal side of the membrane. N-linked (GlcNAc...) asparagine glycosylation is present at Asn204. Mn(2+)-binding residues include Asp227 and Asp229. A glycan (N-linked (GlcNAc...) asparagine) is linked at Asn300.

The protein belongs to the glycosyltransferase 49 family. As to quaternary structure, interacts with LARGE1 and LARGE2. Mn(2+) serves as cofactor.

It localises to the golgi apparatus membrane. It carries out the reaction 3-O-[beta-D-Xyl-(1-&gt;4)-Rib-ol-P-Rib-ol-P-3-beta-D-GalNAc-(1-&gt;3)-beta-D-GlcNAc-(1-&gt;4)-(O-6-P-alpha-D-Man)]-Thr-[protein] + UDP-alpha-D-glucuronate = 3-O-[beta-D-GlcA-(1-&gt;3)-beta-D-Xyl-(1-&gt;4)-Rib-ol-P-Rib-ol-P-3-beta-D-GalNAc-(1-&gt;3)-beta-D-GlcNAc-(1-&gt;4)-(O-6-P-alpha-D-Man)]-Thr-[protein] + UDP + H(+). It participates in protein modification; protein glycosylation. Its function is as follows. Beta-1,4-glucuronyltransferase involved in O-mannosylation of alpha-dystroglycan (DAG1). Transfers a glucuronic acid (GlcA) residue onto a xylose (Xyl) acceptor to produce the glucuronyl-beta-1,4-xylose-beta disaccharide primer, which is further elongated by LARGE1, during synthesis of phosphorylated O-mannosyl glycan. Phosphorylated O-mannosyl glycan is a carbohydrate structure present in alpha-dystroglycan (DAG1), which is required for binding laminin G-like domain-containing extracellular proteins with high affinity. Required for axon guidance; via its function in O-mannosylation of alpha-dystroglycan (DAG1). This Pongo abelii (Sumatran orangutan) protein is Beta-1,4-glucuronyltransferase 1.